Consider the following 131-residue polypeptide: MDKKTIYFICTGNSCRSQMAEGWGKEILGEGWNVYSAGIETHGVNPKAIEAMKEVDIDISNHTSDLIDNDILKQSDLVVTLCSDADNNCPILPPNVKKEHWGFDDPAGKEWSEFQRVRDEIKLAIEKFKLR.

Active-site nucleophile residues include C10, C82, and C89. 2 disulfide bridges follow: C10–C82 and C82–C89.

This sequence belongs to the low molecular weight phosphotyrosine protein phosphatase family. Thioredoxin-coupled ArsC subfamily.

It is found in the cytoplasm. The catalysed reaction is arsenate + [thioredoxin]-dithiol + H(+) = arsenite + [thioredoxin]-disulfide + H2O. Functionally, catalyzes the reduction of arsenate [As(V)] to arsenite [As(III)]. The polypeptide is Arsenate reductase (Staphylococcus aureus (strain N315)).